The following is a 181-amino-acid chain: Ribulose bisphosphate carboxylase small subunit, chloroplastic 1 (181 aa).

A chloroplast-targeting transit peptide spans Met-1–Arg-57.

This sequence belongs to the RuBisCO small chain family. In terms of assembly, (Microbial infection) Binds to tobamovirus movement protein; this interaction seems required for viral systemic movement. Heterohexadecamer of 8 large and 8 small subunits.

The protein localises to the plastid. The protein resides in the chloroplast. It is found in the cell junction. It localises to the plasmodesma. Its function is as follows. RuBisCO catalyzes two reactions: the carboxylation of D-ribulose 1,5-bisphosphate, the primary event in carbon dioxide fixation, as well as the oxidative fragmentation of the pentose substrate. Both reactions occur simultaneously and in competition at the same active site. Although the small subunit is not catalytic it is essential for maximal activity. Involved in antiviral defenses. The protein is Ribulose bisphosphate carboxylase small subunit, chloroplastic 1 of Solanum lycopersicum (Tomato).